We begin with the raw amino-acid sequence, 453 residues long: DNA repair protein RadA (453 aa).

Residues 10-27 form a C4-type zinc finger; that stretch reads CQECGYQSPKYLGRCPNC. 95-102 contacts ATP; the sequence is GDPGIGKS. A RadA KNRFG motif motif is present at residues 251–255; sequence KNRFG. The interval 350-453 is lon-protease-like; it reads DAYLKSAGGV…VGQVLKAVFS (104 aa).

It belongs to the RecA family. RadA subfamily.

In terms of biological role, DNA-dependent ATPase involved in processing of recombination intermediates, plays a role in repairing DNA breaks. Stimulates the branch migration of RecA-mediated strand transfer reactions, allowing the 3' invading strand to extend heteroduplex DNA faster. Binds ssDNA in the presence of ADP but not other nucleotides, has ATPase activity that is stimulated by ssDNA and various branched DNA structures, but inhibited by SSB. Does not have RecA's homology-searching function. This Streptococcus pyogenes serotype M6 (strain ATCC BAA-946 / MGAS10394) protein is DNA repair protein RadA.